We begin with the raw amino-acid sequence, 388 residues long: G2/mitotic-specific cyclin-B2 (388 aa).

The disordered stretch occupies residues 46-67 (ATNGKVGPSKKPSKASCVQKPK).

It belongs to the cyclin family. Cyclin AB subfamily. Interacts with the CDK1 protein kinase to form a serine/threonine kinase holoenzyme complex also known as maturation promoting factor (MPF). The cyclin subunit imparts substrate specificity to the complex.

Essential for the control of the cell cycle at the G2/M (mitosis) transition. The protein is G2/mitotic-specific cyclin-B2 (ccnb2) of Oryzias curvinotus (Hynann ricefish).